A 104-amino-acid chain; its full sequence is Complex III assembly factor LYRM7 (104 aa).

Belongs to the complex I LYR family. In terms of assembly, interacts with UQCRFS1.

The protein localises to the mitochondrion matrix. In terms of biological role, assembly factor required for Rieske Fe-S protein UQCRFS1 incorporation into the cytochrome b-c1 (CIII) complex. Functions as a chaperone, binding to this subunit within the mitochondrial matrix and stabilizing it prior to its translocation and insertion into the late CIII dimeric intermediate within the mitochondrial inner membrane. The polypeptide is Complex III assembly factor LYRM7 (lyrm7) (Xenopus tropicalis (Western clawed frog)).